The chain runs to 122 residues: MIQSQTYLNVADNSGARKLMCIRVLGAGNRNTANIGDIIIAIIKEAAPNMPLEESEVVRAVVIRTCKELKRSDGMIIRSDDNAAVVIDQKGNPRGTRVFGSVTEELRELNFTKIISLAPEVL.

Belongs to the universal ribosomal protein uL14 family. Part of the 50S ribosomal subunit.

It is found in the plastid. It localises to the chloroplast. Binds to 23S rRNA. The chain is Large ribosomal subunit protein uL14c from Cryptomeria japonica (Japanese cedar).